The chain runs to 186 residues: Small ribosomal subunit protein uS7 (186 aa).

This sequence belongs to the universal ribosomal protein uS7 family. Part of the 30S ribosomal subunit.

Functionally, one of the primary rRNA binding proteins, it binds directly to 16S rRNA where it nucleates assembly of the head domain of the 30S subunit. Is located at the subunit interface close to the decoding center. In Methanococcoides burtonii (strain DSM 6242 / NBRC 107633 / OCM 468 / ACE-M), this protein is Small ribosomal subunit protein uS7.